The following is a 413-amino-acid chain: MKRVNSCVKSDEHVLEELETEGERQLKSLLQHQLDTSVSIEECMSKKESFAPGTMYKPFGKEAAGTMTLSQFQTLHEKDQETASLRELGLNETEILIWKSHVSGEKKTKLRATPEAIQNRLQDIEERISERQRILCLPQRFAKSKQLTRREMEIEKSLFQGADRHSFLKALYYQDEPQKKNKGDPMNNLESFYQEMIMKKRLEEFQLMRGEPFASHSLVSATSVGDSGTAESPSLLQDKGKQAAQGKGPSLHVANVIDFSPEQCWTGPKKLTQPIEFVPEDEIQRNRLSEEEIRKIPMFSSYNPGEPNKVLYLKNLSPRVTERDLVSLFARFQEKKGPPIQFRMMTGRMRGQAFITFPNKEIAWQALHLVNGYKLHGKILVIEFGKNKKQRSNLQATSLISCATGSTTEISGS.

The span at 223 to 235 (SVGDSGTAESPSL) shows a compositional bias: polar residues. The segment at 223–247 (SVGDSGTAESPSLLQDKGKQAAQGK) is disordered. Position 232 is a phosphoserine (serine 232). The RRM domain maps to 309–387 (KVLYLKNLSP…KILVIEFGKN (79 aa)).

Its function is as follows. May bind RNA. This Homo sapiens (Human) protein is RNA-binding protein 41 (RBM41).